Consider the following 593-residue polypeptide: Developmental and secondary metabolism regulator VEL1 (593 aa).

The span at 1 to 16 (MSNIVVSNETKSQSVR) shows a compositional bias: polar residues. The interval 1 to 21 (MSNIVVSNETKSQSVRTTKDG) is disordered. The Velvet domain occupies 21–212 (GRQIRYNLQV…AEQGCRVRIR (192 aa)). The Nuclear localization signal motif lies at 35 to 40 (ERARAC). The disordered stretch occupies residues 218–569 (RRRENKSSKE…PGSPDMEEPM (352 aa)). The segment covering 310–326 (PSYGSNQPQYSQQYQTP) has biased composition (low complexity). The segment covering 327 to 340 (QPAPMMQPPQPPQH) has biased composition (pro residues). Low complexity-rich tracts occupy residues 341 to 360 (STPY…HQAQ) and 367 to 389 (QQYG…QPQY). Polar residues-rich tracts occupy residues 413–429 (SSIT…SSHP) and 440–449 (GRSQQMSQPL). Residues 443-487 (QQMSQPLHSSPQSYASSAPSHQSLPSLRPIVADKLEPVSPSYQSP) form a PEST region. Positions 450 to 465 (HSSPQSYASSAPSHQS) are enriched in low complexity. 2 stretches are compositionally biased toward polar residues: residues 482–505 (PSYQ…SNQH) and 512–534 (NPQT…SSTF).

It belongs to the velvet family. VeA subfamily. In terms of assembly, component of the heterotrimeric velvet complex composed of LAE1, VEL1 and VEL2; VEL1 acting as a bridging protein between LAE1 and VEL2.

The protein resides in the nucleus. Its subcellular location is the cytoplasm. Its function is as follows. Component of the velvet transcription factor complex that controls sexual/asexual developmental ratio in response to light, promoting sexual development in the darkness while stimulating asexual sporulation under illumination. The velvet complex acts as a global regulator for secondary metabolite gene expression. Controls the expression of the T-toxin gene cluster. Promotes oxidative stress tolerance and acts as a virulence factors during infection. Negatively regulate mycelial pigmentation and controls sexual development, as well as asexual development during vegetative growth. This chain is Developmental and secondary metabolism regulator VEL1, found in Cochliobolus heterostrophus (strain C5 / ATCC 48332 / race O) (Southern corn leaf blight fungus).